We begin with the raw amino-acid sequence, 175 residues long: Shikimate kinase (175 aa).

An ATP-binding site is contributed by 14 to 19; it reads GAGKST. A Mg(2+)-binding site is contributed by Ser-18. Residues Asp-36, Arg-60, and Gly-82 each contribute to the substrate site. Arg-120 serves as a coordination point for ATP. A substrate-binding site is contributed by Arg-140. An ATP-binding site is contributed by Gln-157.

It belongs to the shikimate kinase family. In terms of assembly, monomer. Mg(2+) serves as cofactor.

The protein localises to the cytoplasm. It carries out the reaction shikimate + ATP = 3-phosphoshikimate + ADP + H(+). It functions in the pathway metabolic intermediate biosynthesis; chorismate biosynthesis; chorismate from D-erythrose 4-phosphate and phosphoenolpyruvate: step 5/7. Its function is as follows. Catalyzes the specific phosphorylation of the 3-hydroxyl group of shikimic acid using ATP as a cosubstrate. This Pasteurella multocida (strain Pm70) protein is Shikimate kinase.